We begin with the raw amino-acid sequence, 226 residues long: Phosphoribosylformylglycinamidine synthase subunit PurQ (226 aa).

The Glutamine amidotransferase type-1 domain occupies 3-226; sequence RVAVIRFPGT…FESLVEWCRS (224 aa). The active-site Nucleophile is the Cys-86. Active-site residues include His-199 and Glu-201.

In terms of assembly, part of the FGAM synthase complex composed of 1 PurL, 1 PurQ and 2 PurS subunits.

The protein localises to the cytoplasm. It catalyses the reaction N(2)-formyl-N(1)-(5-phospho-beta-D-ribosyl)glycinamide + L-glutamine + ATP + H2O = 2-formamido-N(1)-(5-O-phospho-beta-D-ribosyl)acetamidine + L-glutamate + ADP + phosphate + H(+). The catalysed reaction is L-glutamine + H2O = L-glutamate + NH4(+). The protein operates within purine metabolism; IMP biosynthesis via de novo pathway; 5-amino-1-(5-phospho-D-ribosyl)imidazole from N(2)-formyl-N(1)-(5-phospho-D-ribosyl)glycinamide: step 1/2. Its function is as follows. Part of the phosphoribosylformylglycinamidine synthase complex involved in the purines biosynthetic pathway. Catalyzes the ATP-dependent conversion of formylglycinamide ribonucleotide (FGAR) and glutamine to yield formylglycinamidine ribonucleotide (FGAM) and glutamate. The FGAM synthase complex is composed of three subunits. PurQ produces an ammonia molecule by converting glutamine to glutamate. PurL transfers the ammonia molecule to FGAR to form FGAM in an ATP-dependent manner. PurS interacts with PurQ and PurL and is thought to assist in the transfer of the ammonia molecule from PurQ to PurL. The polypeptide is Phosphoribosylformylglycinamidine synthase subunit PurQ (Methanopyrus kandleri (strain AV19 / DSM 6324 / JCM 9639 / NBRC 100938)).